Consider the following 80-residue polypeptide: Pre-core protein X (80 aa).

Positions Ala2 to Gly32 are excised as a propeptide. The segment at Met18–His45 is disordered. The segment covering Arg34 to His45 has biased composition (basic residues). A propeptide spanning residues Ile52–His80 is cleaved from the precursor.

Belongs to the adenoviridae core protein X family. In terms of assembly, interacts with the core-capsid bridging protein; this interaction bridges the virus core to the capsid. In terms of processing, cleaved by the viral protease during virion maturation to form the mature protein.

It localises to the host nucleus. It is found in the host nucleolus. The protein localises to the virion. In terms of biological role, interacts with the viral DNA and aids in tightly condensing it within the capsid. Cleavage of pre-core protein X may serve to partially relax this structure within the mature virion prior to its entry into the nucleus. In Human adenovirus C serotype 2 (HAdV-2), this protein is Pre-core protein X.